Reading from the N-terminus, the 642-residue chain is MYKSIAIMIILLPLASALINGLFVRRIDKKLASIVATSFLSLSALFALIIFYHTGLNGHIIHIKLLPWIEVSQFKVDWSIYIDQLTSIMFIAVTWVSSVVHIYSLGYMSRDKGIVRFLSFLSLFTFFMLMLVSADNFLQLFFGWEGVGICSYLLIGFWYSKESANKAAIKAFIANRVGDFAFILGVITIIFYCHSANYEDVFLLAPKLANTKILLADFEISILDIACLLLFIGCMGKSAQIGLHVWLPDAMEGPTPVSALIHAATMVTAGVFLVARCSYLFEYSPMVLQFITIIGGITCLFAASIAIMQNDIKKIIAYSTCSQLGYMFMACGVSAYNSGIFHLVTHAFFKALLFLSAGSVIHAVHEQDIFKMGELRNKMPITYGNFLIGSLALIGIYPLAGFYSKDSILEAAYSSGSFMFIFGILAAILTAIYSMKIIMLVFHGKTRLEKDVFEHAHEPPKVMNNPLTLLVAGSFFSGMIGYYLLSMDKPNGYFHDSLLNLHAYKLLITHPPLHIKLLPMVVGIIGIVVGIYLYKSDVVMSFLRRQESSKDNYFTKILINKYYFDELYNFLIVKPINCLACLFYSGDQKIIDRFGPNGFARSVNCFSRLTGKTQTGYVFNYTLYVVLFVVVTISYFVWLVAV.

The next 16 membrane-spanning stretches (helical) occupy residues 4–24 (SIAIMIILLPLASALINGLFV), 31–51 (LASIVATSFLSLSALFALIIF), 88–108 (IMFIAVTWVSSVVHIYSLGYM), 114–134 (IVRFLSFLSLFTFFMLMLVSA), 137–157 (FLQLFFGWEGVGICSYLLIGF), 171–191 (AFIANRVGDFAFILGVITIIF), 213–233 (ILLADFEISILDIACLLLFIG), 255–275 (TPVSALIHAATMVTAGVFLVA), 287–307 (VLQFITIIGGITCLFAASIAI), 315–335 (IIAYSTCSQLGYMFMACGVSA), 340–360 (IFHLVTHAFFKALLFLSAGSV), 383–403 (YGNFLIGSLALIGIYPLAGFY), 418–438 (FMFIFGILAAILTAIYSMKII), 467–487 (LTLLVAGSFFSGMIGYYLLSM), 513–533 (LHIKLLPMVVGIIGIVVGIYL), and 622–642 (TLYVVLFVVVTISYFVWLVAV).

Belongs to the complex I subunit 5 family.

It localises to the cell membrane. The catalysed reaction is a quinone + NADH + 5 H(+)(in) = a quinol + NAD(+) + 4 H(+)(out). Functionally, NDH-1 shuttles electrons from NADH, via FMN and iron-sulfur (Fe-S) centers, to quinones in the respiratory chain. Couples the redox reaction to proton translocation (for every two electrons transferred, four hydrogen ions are translocated across the cytoplasmic membrane), and thus conserves the redox energy in a proton gradient. The polypeptide is NADH-quinone oxidoreductase subunit L (nuoL) (Rickettsia bellii (strain RML369-C)).